Consider the following 198-residue polypeptide: Recombination protein RecR (198 aa).

A C4-type zinc finger spans residues 58-73; it reads CSICGNYTDSDPCAIC. The region spanning 81 to 175 is the Toprim domain; sequence SIICVIEQPK…KVTRIAHGVP (95 aa).

The protein belongs to the RecR family.

In terms of biological role, may play a role in DNA repair. It seems to be involved in an RecBC-independent recombinational process of DNA repair. It may act with RecF and RecO. In Clostridium novyi (strain NT), this protein is Recombination protein RecR.